The following is a 1481-amino-acid chain: MQRSPLEKASVVSKLFFSWTRPILKKGYRQRLELSDIYQIPSADSADNLSEKLEREWDRELASKKNPKLINALRRCFFWRFTFYGILLYLGEVTKAVQPLLLGRIIASYDPDNKTERSIAIYLGIGLCLLFIVRTLLLHPAIFGLHHIGMQMRIAMFSLIYKKTLKLSSRVLDKISIGQLVSLLSNNLNKFDEGLALAHFVWIAPLQVALLMGLIWELLQASAFCGLGFLIVLALFQAGLGRMMMKYRDQRAGKINERLVITSEMIENIQSVKAYCWEEAMEKIIENLRQTELKLTRKAAYVRYFNSSAFFFSGFFVVFLSVLPYALIKGIVLRKIFTTISFCIVLRMAVTRQFPWAVQTWYDSLGAINKIQDFLQKQEYKTLEYNLTTTEVVMENVTAFWEEGFGELFEKAKQNNNNRKASNGDDNLFFSNFSLLGTPVLKDINFKIERGQLLAVAGSTGAGKTSLLMMIMGELEPSEGKIKHSGRISFCSQFSWIMPGTIKENIIFGVSYDEYRYRSVIKACQLEEDISKFAEKDNIVLGEGGITLSGGQRARISLARAVYKDADLYLLDSPFGYLDVLTEKEIFESCVCKLMANKTRILVTSKMEHLKKADKILILHEGSSYFYGTFSELQNLRPDFSSKLMGYDSFDQFSSERRNSILTETLRRFSLEGDAPVSWTETKKQSFKQTGEFGEKRKNSILNSINSIRKFSIVQKTPLQMNGIEEDSDEPLERRLSLVPDSEQGEAILPRISMINTGPALQVRRRQSVLNMMTHSVNQGQSVHRKTTASTRKVSLAPQANLTELDIYSRRLSQETGLEISEEINEEDLKECFFDDMESIPAVTTWNTYLRYITLHKSLIFVLIWCLVIFLAEVAASLVVLWLLGNTPFQDKGNSTYSRNNSYAVIITNTSSYYVFYIYVGVADTLLALGFFRGLPLVHTLITVSKMLHHKMLHSVLQAPMSTLNTLKAGGILNRFSKDIAILDDLLPLTIFDFIQLLLIVIGAIAVVSVLQPYIFLATVPVIAAFILLRAYFLQTSQQLKQLESAGRSPIFTHLVTSLKGLWTLRAFGRQPYFETLFHKALNLHTANWFLYLSTLRWFQMRIEMIFVIFFIAVTFISILTTGEGEGTVGIILTLAMNIMSTLQWAVNSSIDVDSLMRSVSRVFKFIDMPTEEGKPTKSTKAYRNGQLSKVMIIENSHVKKDDIWPSGGQMTIKDLTAKYIEGGNAILENISFSISPGQRVGLLGRTGSGKSTLLSAFLRLLNTEGEIQIDGVSWDSITLQQWRKAFGVIPQKVFIFTGTFRKNLDPYEQWSDQEIWKVADEVGLRSVIEQFPGKLDFVLVDGGCVLSHGHKQLMCLARSVLSKAKILLLDEPSAHLDPVTYQIIRRALKQAFADCTVILCEHRIEAMLECQQFLVIEENKVRQYDSIQKLLNEKSLFRQAISHSDRVKLFPHRNSSKYKSQPQIASLKEETEEEVQETRL.

Topologically, residues 1–77 are cytoplasmic; sequence MQRSPLEKAS…KLINALRRCF (77 aa). A helical membrane pass occupies residues 78-98; that stretch reads FWRFTFYGILLYLGEVTKAVQ. The ABC transmembrane type-1 1 domain occupies 81–365; it reads FTFYGILLYL…WAVQTWYDSL (285 aa). Residues 99-122 are Extracellular-facing; that stretch reads PLLLGRIIASYDPDNKTERSIAIY. A helical membrane pass occupies residues 123-146; it reads LGIGLCLLFIVRTLLLHPAIFGLH. Topologically, residues 147–195 are cytoplasmic; it reads HIGMQMRIAMFSLIYKKTLKLSSRVLDKISIGQLVSLLSNNLNKFDEGL. A helical transmembrane segment spans residues 196–216; that stretch reads ALAHFVWIAPLQVALLMGLIW. Residues 217–222 are Extracellular-facing; sequence ELLQAS. The chain crosses the membrane as a helical span at residues 223 to 243; that stretch reads AFCGLGFLIVLALFQAGLGRM. The Cytoplasmic portion of the chain corresponds to 244-298; it reads MMKYRDQRAGKINERLVITSEMIENIQSVKAYCWEEAMEKIIENLRQTELKLTRK. A helical membrane pass occupies residues 299 to 319; the sequence is AAYVRYFNSSAFFFSGFFVVF. Topologically, residues 320–339 are extracellular; it reads LSVLPYALIKGIVLRKIFTT. A helical transmembrane segment spans residues 340–358; it reads ISFCIVLRMAVTRQFPWAV. Topologically, residues 359 to 858 are cytoplasmic; that stretch reads QTWYDSLGAI…YLRYITLHKS (500 aa). ATP-binding positions include W401, S434, 458–465, and Q493; that span reads GSTGAGKT. Positions 423–646 constitute an ABC transporter 1 domain; it reads NGDDNLFFSN…RPDFSSKLMG (224 aa). A lipid anchor (S-palmitoyl cysteine) is attached at C524. S549 and S660 each carry phosphoserine. Residues 654 to 831 are disordered R region; sequence SSERRNSILT…EEINEEDLKE (178 aa). S670 is modified (phosphoserine; by PKA). The residue at position 686 (S686) is a Phosphoserine. A Glycyl lysine isopeptide (Lys-Gly) (interchain with G-Cter in ubiquitin) cross-link involves residue K688. Phosphoserine is present on residues S700 and S712. Position 717 is a phosphothreonine (T717). S737, S753, S768, S790, S795, and S813 each carry phosphoserine. A helical membrane pass occupies residues 859–879; the sequence is LIFVLIWCLVIFLAEVAASLV. Positions 859–1155 constitute an ABC transmembrane type-1 2 domain; sequence LIFVLIWCLV…AVNSSIDVDS (297 aa). At 880 to 918 the chain is on the extracellular side; it reads VLWLLGNTPFQDKGNSTYSRNNSYAVIITNTSSYYVFYI. N894, N900, and N909 each carry an N-linked (GlcNAc...) asparagine glycan. The chain crosses the membrane as a discontinuously helical span at residues 919 to 939; it reads YVGVADTLLALGFFRGLPLVH. Topologically, residues 940 to 990 are cytoplasmic; the sequence is TLITVSKMLHHKMLHSVLQAPMSTLNTLKAGGILNRFSKDIAILDDLLPLT. Residues 991–1011 form a helical membrane-spanning segment; it reads IFDFIQLLLIVIGAIAVVSVL. The Extracellular portion of the chain corresponds to 1012-1013; the sequence is QP. Residues 1014–1034 form a helical membrane-spanning segment; sequence YIFLATVPVIAAFILLRAYFL. Over 1035 to 1095 the chain is Cytoplasmic; sequence QTSQQLKQLE…TANWFLYLST (61 aa). The chain crosses the membrane as a helical span at residues 1096 to 1116; sequence LRWFQMRIEMIFVIFFIAVTF. At 1117–1130 the chain is on the extracellular side; the sequence is ISILTTGEGEGTVG. Residues 1131-1151 form a helical membrane-spanning segment; it reads IILTLAMNIMSTLQWAVNSSI. Topologically, residues 1152-1481 are cytoplasmic; sequence DVDSLMRSVS…TEEEVQETRL (330 aa). The 234-residue stretch at 1211 to 1444 folds into the ABC transporter 2 domain; that stretch reads MTIKDLTAKY…KSLFRQAISH (234 aa). ATP is bound by residues Y1220 and 1245 to 1252; that span reads GRTGSGKS. Residues 1387–1481 are interaction with GORASP2; the sequence is RALKQAFADC…TEEEVQETRL (95 aa). C1396 is lipidated: S-palmitoyl cysteine. Phosphoserine occurs at positions 1445 and 1457. Residues 1453-1481 form a disordered region; sequence HRNSSKYKSQPQIASLKEETEEEVQETRL. Acidic residues predominate over residues 1471-1481; the sequence is ETEEEVQETRL. Positions 1479 to 1481 match the PDZ-binding motif; sequence TRL.

It belongs to the ABC transporter superfamily. ABCC family. CFTR transporter (TC 3.A.1.202) subfamily. As to quaternary structure, monomer; does not require oligomerization for channel activity. May form oligomers in the membrane. Interacts with SLC26A3, SLC26A6 and NHERF1. Interacts with SHANK2. Interacts with MYO6. Interacts (via C-terminus) with GOPC (via PDZ domain); this promotes CFTR internalization and thereby decreases channel activity. Interacts with SLC4A7 through NHERF1. Found in a complex with MYO5B and RAB11A. Interacts with ANO1. Interacts with SLC26A8. Interacts with AHCYL1; the interaction increases CFTR activity. Interacts with CSE1L. The core-glycosylated form interacts with GORASP2 (via PDZ GRASP-type 1 domain) in respone to ER stress. Interacts with MARCHF2; the interaction leads to CFTR ubiqtuitination and degradation. Interacts with ADGRG2. In terms of processing, N-glycosylated. Post-translationally, phosphorylated; cAMP treatment promotes phosphorylation and activates the channel. Dephosphorylation decreases the ATPase activity (in vitro). Phosphorylation at PKA sites activates the channel. Phosphorylation at PKC sites enhances the response to phosphorylation by PKA. Phosphorylated by AMPK; this inhibits channel activity. Ubiquitinated, leading to its degradation in the lysosome. Deubiquitination by USP10 in early endosomes enhances its endocytic recycling to the cell membrane. Ubiquitinated by RNF185 during ER stress. Ubiquitinated by MARCHF2.

It localises to the apical cell membrane. The protein resides in the early endosome membrane. The protein localises to the cell membrane. It is found in the recycling endosome membrane. Its subcellular location is the endoplasmic reticulum membrane. It localises to the nucleus. The catalysed reaction is ATP + H2O + closed Cl(-) channel = ADP + phosphate + open Cl(-) channel.. The enzyme catalyses chloride(in) = chloride(out). It carries out the reaction hydrogencarbonate(in) = hydrogencarbonate(out). It catalyses the reaction ATP + H2O = ADP + phosphate + H(+). Functionally, epithelial ion channel that plays an important role in the regulation of epithelial ion and water transport and fluid homeostasis. Mediates the transport of chloride ions across the cell membrane. Possesses an intrinsic ATPase activity and utilizes ATP to gate its channel; the passive flow of anions through the channel is gated by cycles of ATP binding and hydrolysis by the ATP-binding domains. The ion channel is also permeable to HCO(3)(-); selectivity depends on the extracellular chloride concentration. Exerts its function also by modulating the activity of other ion channels and transporters. Contributes to the regulation of the pH and the ion content of the epithelial fluid layer. Modulates the activity of the epithelial sodium channel (ENaC) complex, in part by regulating the cell surface expression of the ENaC complex. May regulate bicarbonate secretion and salvage in epithelial cells by regulating the transporter SLC4A7. Can inhibit the chloride channel activity of ANO1. Plays a role in the chloride and bicarbonate homeostasis during sperm epididymal maturation and capacitation. This Aotus nancymaae (Ma's night monkey) protein is Cystic fibrosis transmembrane conductance regulator.